Consider the following 696-residue polypeptide: Glycine--tRNA ligase beta subunit (696 aa).

The protein belongs to the class-II aminoacyl-tRNA synthetase family. In terms of assembly, tetramer of two alpha and two beta subunits.

The protein localises to the cytoplasm. It catalyses the reaction tRNA(Gly) + glycine + ATP = glycyl-tRNA(Gly) + AMP + diphosphate. The chain is Glycine--tRNA ligase beta subunit from Nitratidesulfovibrio vulgaris (strain ATCC 29579 / DSM 644 / CCUG 34227 / NCIMB 8303 / VKM B-1760 / Hildenborough) (Desulfovibrio vulgaris).